The chain runs to 329 residues: Acetyl-coenzyme A carboxylase carboxyl transferase subunit alpha (329 aa).

The CoA carboxyltransferase C-terminal domain maps to 40-294; the sequence is QLETLAARRR…REAIERHLDD (255 aa).

This sequence belongs to the AccA family. As to quaternary structure, acetyl-CoA carboxylase is a heterohexamer composed of biotin carboxyl carrier protein (AccB), biotin carboxylase (AccC) and two subunits each of ACCase subunit alpha (AccA) and ACCase subunit beta (AccD).

Its subcellular location is the cytoplasm. It catalyses the reaction N(6)-carboxybiotinyl-L-lysyl-[protein] + acetyl-CoA = N(6)-biotinyl-L-lysyl-[protein] + malonyl-CoA. Its pathway is lipid metabolism; malonyl-CoA biosynthesis; malonyl-CoA from acetyl-CoA: step 1/1. In terms of biological role, component of the acetyl coenzyme A carboxylase (ACC) complex. First, biotin carboxylase catalyzes the carboxylation of biotin on its carrier protein (BCCP) and then the CO(2) group is transferred by the carboxyltransferase to acetyl-CoA to form malonyl-CoA. The chain is Acetyl-coenzyme A carboxylase carboxyl transferase subunit alpha from Prochlorococcus marinus (strain MIT 9303).